A 470-amino-acid chain; its full sequence is Protein escargot (470 aa).

The interval L271 to Y309 is disordered. 4 consecutive C2H2-type zinc fingers follow at residues Y309 to H331, F344 to H366, C370 to H392, and F398 to H420. The C2H2-type 5; atypical zinc finger occupies Y426 to C449. The disordered stretch occupies residues G448 to P470.

It belongs to the snail C2H2-type zinc-finger protein family. As to expression, expression is complex and dynamic. In early embryogenesis, expression begins on the dorsal side of the embryo. Expressed in a pattern of longitudinal stripes early in germband elongation. Later in embryogenesis, expression is in cells that correspond to the wing, haltere, leg and genital imaginal disks and the abdominal histoblasts. In the embryonic leg disk, expression is restricted to imaginal cells. Also expressed in the central nervous system (CNS), tracheae and head of stage 14 embryos. CNS and tracheal expression decays during later stages, though head expression persists until late in embryogenesis. In third instar larvae, expression is seen in the brain and in regions of many imaginal tissues including the eye-antennal, wing, leg and haltere disks. Expressed in embryonic, larval and adult male germline stem cells and in the somatic cells of the embryonic gonads.

The protein resides in the nucleus. Transcription factor that can both stimulate and repress transcription. Binds to the consensus DNA sequence 5'-A/GCAGGTG-3'. Regulates cell motility and adhesion during tracheal morphogenesis by stimulating transcription of the DE-cadherin gene shg at branch tips, thereby promoting tracheal tube fusion. Maintains diploidy in imaginal cells by inhibiting the transcription of genes required for endoreplication. Required for development of the genital disk and acts as an intrinsic determinant of wing cell fate. The somatic protein is required for maintenance of male germ cells. Acts with other members of the snail protein family to control embryonic central nervous system development. The sequence is that of Protein escargot (esg) from Drosophila melanogaster (Fruit fly).